The chain runs to 255 residues: Fasciclin-like arabinogalactan protein 14 (255 aa).

The signal sequence occupies residues 1–23; sequence MSSSLTIFFFFFASTFLYTSSNS. Residues 24–169 enclose the FAS1 domain; the sequence is FNITNILNEH…ISVLHISSAI (146 aa). Residues Asn25, Asn99, Asn125, and Asn159 are each glycosylated (N-linked (GlcNAc...) asparagine). The interval 179–231 is disordered; sequence PTASPLSPVSSPPRPAESPNDDGQDFDEPPSSAPGAAADEPSENAGSANGVSR. Residues 197 to 206 show a composition bias toward acidic residues; sequence PNDDGQDFDE. Residues 222–231 are compositionally biased toward polar residues; the sequence is NAGSANGVSR. Residue Ser225 is the site of GPI-anchor amidated serine attachment. The propeptide at 226-255 is removed in mature form; sequence ANGVSRNDSQPAFAFTLLMSFIWWFMARLR.

Belongs to the fasciclin-like AGP family.

Its subcellular location is the cell membrane. In terms of biological role, may be a cell surface adhesion protein. The sequence is that of Fasciclin-like arabinogalactan protein 14 (FLA14) from Arabidopsis thaliana (Mouse-ear cress).